The sequence spans 325 residues: Cyclic AMP-responsive element-binding protein 1 (325 aa).

Composition is skewed to polar residues over residues 1 to 11 (MESGAENQQSG) and 18 to 27 (AESQQMTVQA). Disordered regions lie at residues 1–27 (MESGAENQQSGDAAVTEAESQQMTVQA) and 92–111 (SEDSQESVDSVTDSQKRREI). Residues 85-144 (QISTIAESEDSQESVDSVTDSQKRREILSRRPSYRKILNDLSSDAPGVPRIEEEKSEEET) enclose the KID domain. Ser-117 carries the post-translational modification Phosphoserine; by CaMK1, CaMK2, CaMK4, PKB/AKT1 or PKB/AKT2, RPS6KA3, RPS6KA4, RPS6KA5 and SGK1. Residue Lys-120 forms a Glycyl lysine isopeptide (Lys-Gly) (interchain with G-Cter in SUMO2) linkage. Residues 124–146 (DLSSDAPGVPRIEEEKSEEETSA) are disordered. A Phosphoserine; by CaMK2 modification is found at Ser-126. Phosphoserine; by HIPK2 is present on Ser-255. The bZIP domain occupies 267–325 (ARKREVRLMKNREAARECRRKKKEYVKCLENRVAVLENQNKTLIEELKALKDLYCHKSD). A basic motif region spans residues 268-293 (RKREVRLMKNREAARECRRKKKEYVK). Glycyl lysine isopeptide (Lys-Gly) (interchain with G-Cter in SUMO1) cross-links involve residues Lys-269 and Lys-288. The tract at residues 295–316 (LENRVAVLENQNKTLIEELKAL) is leucine-zipper.

Belongs to the bZIP family. As to quaternary structure, interacts with PPRC1. Binds DNA as a dimer. This dimer is stabilized by magnesium ions. Interacts, through the bZIP domain, with the coactivators CRTC1/TORC1, CRTC2/TORC2 and CRTC3/TORC3. When phosphorylated on Ser-117, binds CREBBP. Interacts with CREBL2; regulates CREB1 phosphorylation, stability and transcriptional activity. Interacts (phosphorylated form) with TOX3. Interacts with ARRB1. Binds to HIPK2. Interacts with SGK1. Interacts with TSSK4; this interaction facilitates phosphorylation on Ser-117. Forms a complex with KMT2A and CREBBP. Interacts with TOX4; CREB1 is required for full induction of TOX4-dependent activity and the interaction is increased by cAMP and inhibited by insulin. Post-translationally, sumoylated with SUMO1. Sumoylation on Lys-288, but not on Lys-269, is required for nuclear localization of this protein. Sumoylation is enhanced under hypoxia, promoting nuclear localization and stabilization. Stimulated by phosphorylation. Phosphorylation of both Ser-117 and Ser-126 in the SCN regulates the activity of CREB and participates in circadian rhythm generation. Phosphorylation of Ser-117 allows CREBBP binding. Phosphorylated upon calcium influx by CaMK4 and CaMK2 on Ser-117. CaMK4 is much more potent than CaMK2 in activating CREB. Phosphorylated by CaMK2 on Ser-126. Phosphorylation of Ser-126 blocks CREB-mediated transcription even when Ser-117 is phosphorylated. Phosphorylated by CaMK1. Phosphorylation of Ser-255 by HIPK2 in response to genotoxic stress promotes CREB1 activity, facilitating the recruitment of the coactivator CBP. Phosphorylated at Ser-117 by RPS6KA3, RPS6KA4 and RPS6KA5 in response to mitogenic or stress stimuli. CREBL2 positively regulates phosphorylation at Ser-117 thereby stimulating CREB1 transcriptional activity. In liver, phosphorylation is induced by fasting or glucagon in a circadian fashion. Phosphorylated by TSSK4 on Ser-117.

It is found in the nucleus. Functionally, phosphorylation-dependent transcription factor that stimulates transcription upon binding to the DNA cAMP response element (CRE), a sequence present in many viral and cellular promoters. Transcription activation is enhanced by the TORC coactivators which act independently of Ser-117 phosphorylation. Involved in different cellular processes including the synchronization of circadian rhythmicity and the differentiation of adipose cells. Regulates the expression of apoptotic and inflammatory response factors in cardiomyocytes in response to ERFE-mediated activation of AKT signaling. In Bos taurus (Bovine), this protein is Cyclic AMP-responsive element-binding protein 1 (CREB1).